Here is a 155-residue protein sequence, read N- to C-terminus: SsrA-binding protein (155 aa).

It belongs to the SmpB family.

It is found in the cytoplasm. Required for rescue of stalled ribosomes mediated by trans-translation. Binds to transfer-messenger RNA (tmRNA), required for stable association of tmRNA with ribosomes. tmRNA and SmpB together mimic tRNA shape, replacing the anticodon stem-loop with SmpB. tmRNA is encoded by the ssrA gene; the 2 termini fold to resemble tRNA(Ala) and it encodes a 'tag peptide', a short internal open reading frame. During trans-translation Ala-aminoacylated tmRNA acts like a tRNA, entering the A-site of stalled ribosomes, displacing the stalled mRNA. The ribosome then switches to translate the ORF on the tmRNA; the nascent peptide is terminated with the 'tag peptide' encoded by the tmRNA and targeted for degradation. The ribosome is freed to recommence translation, which seems to be the essential function of trans-translation. The polypeptide is SsrA-binding protein (Streptococcus equi subsp. equi (strain 4047)).